A 244-amino-acid polypeptide reads, in one-letter code: Derlin-2.1 (244 aa).

The Cytoplasmic segment spans residues 1 to 21 (MAQAVEEWYKQMPIITRSYLT). Residues 22-42 (AAVVTTVGCSLEIISPYNLYL) traverse the membrane as a helical segment. At 43–96 (NPTLVVKQYQFWRLVTNFLYFRKMDLDFLFHMFFLARYCKLLEENSFRGKTADF) the chain is on the lumenal side. Residues 97–117 (LYMLLFGATVLTGIVLIGGMI) form a helical membrane-spanning segment. The Cytoplasmic segment spans residues 118–121 (PYLS). A helical transmembrane segment spans residues 122–142 (VSFSKIIFLSNSLTFMMVYVW). The Lumenal portion of the chain corresponds to 143–152 (SKQNPYIHMS). The helical transmembrane segment at 153–173 (FLGLFTFTAAYLPWVLLGFSI) threads the bilayer. Over 174 to 244 (LVGASAWGDF…HAPFDEIHQD (71 aa)) the chain is Cytoplasmic.

This sequence belongs to the derlin family.

Its subcellular location is the endoplasmic reticulum membrane. May be involved in the degradation process of specific misfolded endoplasmic reticulum (ER) luminal proteins. The protein is Derlin-2.1 (DER2.1) of Arabidopsis thaliana (Mouse-ear cress).